We begin with the raw amino-acid sequence, 104 residues long: uncharacterized protein (104 aa).

The protein resides in the mitochondrion. This is an uncharacterized protein from Claviceps purpurea (Ergot fungus).